Consider the following 306-residue polypeptide: Recombination-associated protein RdgC (306 aa).

This sequence belongs to the RdgC family.

Its subcellular location is the cytoplasm. It localises to the nucleoid. In terms of biological role, may be involved in recombination. This Pseudomonas fluorescens (strain Pf0-1) protein is Recombination-associated protein RdgC.